The chain runs to 88 residues: Small ribosomal subunit protein bS16c (88 aa).

Belongs to the bacterial ribosomal protein bS16 family.

It is found in the plastid. It localises to the chloroplast. This is Small ribosomal subunit protein bS16c from Gossypium barbadense (Sea Island cotton).